A 646-amino-acid chain; its full sequence is MIKITFPDGSVREYNEGVNGLQIAESISSRLAQDVLACGVNGETYDLGRPINEDADFVLYKWDDEEGKHAFWHTSAHLLAEALQELYPGIQFGIGPAIENGFYYDVDPGEAVIKESDLPAIEAKMLELSAKKDAVVRESISKTDALKMFGDRGETYKCELISELEDGHITTYTQGAFTDLCRGPHLMTTAPIKAIKLTTVAGAYWRGHEDRKMLTRIYGITFPKKKMLDEYLVLLEEAKKRDHRKIGKEMQLFMFSETVGKGLPMWLPKGTALRLRLQEFLRRIQTRYDYQEVITPPIGNKLLYVTSGHYAKYGKDAFQPIHTPEEGEEYFLKPMNCPHHCEIYKNFPRSYKDLPLRIAEFGTVCRYEQSGELHGLTRVRSFTQDDAHIFCRPDQVKDEFLRVMDIISIVFRSMNFQNFEAQISLRDKVNREKYIGSDDNWEKAEQAIIEACEEKGLPAKIEYGEAAFYGPKLDFMVKDAIGRRWQLGTIQVDYNLPERFELEYMGSDNQKHRPVMIHRAPFGSMERFVAVLIEHTAGKFPLWLTPDQVAILPISEKFNEYAEQVKMYLKMHEIRAIVDDRNEKIGRKIRDNEMKRIPYMLIVGEKEAENGEVSVRRQGEGDKGTMKYEEFAKILNEEVQNMINKW.

Residues M1–K61 enclose the TGS domain. The tract at residues D242–P541 is catalytic. The Zn(2+) site is built by C337, H388, and H518.

This sequence belongs to the class-II aminoacyl-tRNA synthetase family. As to quaternary structure, homodimer. Zn(2+) is required as a cofactor.

The protein resides in the cytoplasm. The catalysed reaction is tRNA(Thr) + L-threonine + ATP = L-threonyl-tRNA(Thr) + AMP + diphosphate + H(+). In terms of biological role, catalyzes the attachment of threonine to tRNA(Thr) in a two-step reaction: L-threonine is first activated by ATP to form Thr-AMP and then transferred to the acceptor end of tRNA(Thr). Also edits incorrectly charged L-seryl-tRNA(Thr). In Bacteroides thetaiotaomicron (strain ATCC 29148 / DSM 2079 / JCM 5827 / CCUG 10774 / NCTC 10582 / VPI-5482 / E50), this protein is Threonine--tRNA ligase.